Consider the following 43-residue polypeptide: Potassium channel toxin gamma-KTx 4.5 (43 aa).

Disulfide bonds link Cys5-Cys23, Cys11-Cys34, Cys20-Cys39, and Cys24-Cys41.

This sequence belongs to the ergtoxin family. Gamma-KTx 4 subfamily. In terms of tissue distribution, expressed by the venom gland.

The protein resides in the secreted. Functionally, reversibly blocks Kv11/ERG potassium channels. This chain is Potassium channel toxin gamma-KTx 4.5, found in Centruroides exilicauda (Bark scorpion).